Consider the following 185-residue polypeptide: Dihydrofolate reductase 1 (185 aa).

The DHFR domain occupies 8–185; the sequence is ELVLVVAADE…QASPRPLDDL (178 aa).

Belongs to the dihydrofolate reductase family.

It carries out the reaction (6S)-5,6,7,8-tetrahydrofolate + NADP(+) = 7,8-dihydrofolate + NADPH + H(+). The protein operates within cofactor biosynthesis; tetrahydrofolate biosynthesis; 5,6,7,8-tetrahydrofolate from 7,8-dihydrofolate: step 1/1. Its function is as follows. Key enzyme in folate metabolism. Catalyzes an essential reaction for de novo glycine and purine synthesis, and for DNA precursor synthesis. The chain is Dihydrofolate reductase 1 (folA1) from Haloarcula marismortui (strain ATCC 43049 / DSM 3752 / JCM 8966 / VKM B-1809) (Halobacterium marismortui).